The chain runs to 459 residues: tRNA modification GTPase MnmE (459 aa).

Positions 22, 87, and 126 each coordinate (6S)-5-formyl-5,6,7,8-tetrahydrofolate. The region spanning 221 to 381 (GINVAICGKP…LEESIEKAVL (161 aa)) is the TrmE-type G domain. Asparagine 231 contacts K(+). GTP contacts are provided by residues 231 to 236 (NVGKSS), 250 to 256 (TSIPGTT), and 275 to 278 (DTAG). Residue serine 235 coordinates Mg(2+). K(+) contacts are provided by threonine 250, isoleucine 252, and threonine 255. A Mg(2+)-binding site is contributed by threonine 256. Residue lysine 459 participates in (6S)-5-formyl-5,6,7,8-tetrahydrofolate binding.

Belongs to the TRAFAC class TrmE-Era-EngA-EngB-Septin-like GTPase superfamily. TrmE GTPase family. In terms of assembly, homodimer. Heterotetramer of two MnmE and two MnmG subunits. K(+) is required as a cofactor.

The protein resides in the cytoplasm. Its function is as follows. Exhibits a very high intrinsic GTPase hydrolysis rate. Involved in the addition of a carboxymethylaminomethyl (cmnm) group at the wobble position (U34) of certain tRNAs, forming tRNA-cmnm(5)s(2)U34. This Syntrophomonas wolfei subsp. wolfei (strain DSM 2245B / Goettingen) protein is tRNA modification GTPase MnmE.